Reading from the N-terminus, the 333-residue chain is Adenosine deaminase (333 aa).

His-12 and His-14 together coordinate Zn(2+). His-14, Asp-16, and Gly-170 together coordinate substrate. His-197 lines the Zn(2+) pocket. Catalysis depends on Glu-200, which acts as the Proton donor. Asp-278 lines the Zn(2+) pocket. Asp-279 contributes to the substrate binding site.

This sequence belongs to the metallo-dependent hydrolases superfamily. Adenosine and AMP deaminases family. Adenosine deaminase subfamily. The cofactor is Zn(2+).

It carries out the reaction adenosine + H2O + H(+) = inosine + NH4(+). It catalyses the reaction 2'-deoxyadenosine + H2O + H(+) = 2'-deoxyinosine + NH4(+). Its function is as follows. Catalyzes the hydrolytic deamination of adenosine and 2-deoxyadenosine. This is Adenosine deaminase from Aliivibrio fischeri (strain MJ11) (Vibrio fischeri).